Reading from the N-terminus, the 213-residue chain is Endonuclease III (213 aa).

In terms of domain architecture, HhH spans phenylalanine 108–asparagine 127. The [4Fe-4S] cluster site is built by cysteine 187, cysteine 194, cysteine 197, and cysteine 203.

Belongs to the Nth/MutY family. The cofactor is [4Fe-4S] cluster.

It carries out the reaction 2'-deoxyribonucleotide-(2'-deoxyribose 5'-phosphate)-2'-deoxyribonucleotide-DNA = a 3'-end 2'-deoxyribonucleotide-(2,3-dehydro-2,3-deoxyribose 5'-phosphate)-DNA + a 5'-end 5'-phospho-2'-deoxyribonucleoside-DNA + H(+). Its function is as follows. DNA repair enzyme that has both DNA N-glycosylase activity and AP-lyase activity. The DNA N-glycosylase activity releases various damaged pyrimidines from DNA by cleaving the N-glycosidic bond, leaving an AP (apurinic/apyrimidinic) site. The AP-lyase activity cleaves the phosphodiester bond 3' to the AP site by a beta-elimination, leaving a 3'-terminal unsaturated sugar and a product with a terminal 5'-phosphate. The chain is Endonuclease III from Rickettsia felis (strain ATCC VR-1525 / URRWXCal2) (Rickettsia azadi).